A 513-amino-acid chain; its full sequence is Solute carrier family 2, facilitated glucose transporter member 10 (513 aa).

The Cytoplasmic portion of the chain corresponds to 1-6 (MGCSVL). A helical transmembrane segment spans residues 7 to 27 (LLTITVSTLGGLVFGYELGII). Topologically, residues 28 to 46 (SGALPQLQTHFSLGCVQQE) are extracellular. The helical transmembrane segment at 47–67 (AVVSALLIGSLFASIIGGWLI) threads the bilayer. Topologically, residues 68–80 (DRHGRRTSILLSN) are cytoplasmic. Residues 81–101 (LLILAGSVILTTGTSFFALVI) traverse the membrane as a helical segment. Residues 102–104 (GRA) lie on the Extracellular side of the membrane. The helical transmembrane segment at 105–125 (VIGFAMTVSSMSCCIFVSEMV) threads the bilayer. Residues 126 to 130 (TPERR) are Cytoplasmic-facing. Residues 131 to 151 (GLMVTLYEVGITVGILIAYAV) traverse the membrane as a helical segment. The Extracellular portion of the chain corresponds to 152–164 (NYIFNNVPLTGWR). Residues 165 to 185 (YMFGFAIIPSLIQLASIVLLP) traverse the membrane as a helical segment. Residues 186–236 (KQAEVFVIHDDDSRQADRLTEETETSNQHQQSEKYGVSDLFKSKDNMRRRT) are Cytoplasmic-facing. A helical membrane pass occupies residues 237–257 (VIGVGLVLSQQFTGQPNVLFY). Residue 246–247 (QQ) coordinates D-glucose. The Extracellular segment spans residues 258–272 (ASTILFSVGFQSNAS). Residue Asn-270 is glycosylated (N-linked (GlcNAc...) asparagine). A helical transmembrane segment spans residues 273 to 293 (AILASVGFGIVKVIATLLAML). Topologically, residues 294–301 (CSDRAGRR) are cytoplasmic. The chain crosses the membrane as a helical span at residues 302–322 (SLLIGGCSMLAVGLILTGFLC). The Extracellular segment spans residues 323 to 376 (RQSVIDTTKRCTSVGPHSNLTLSAEHDEGVGFSSQTLDVHEHLRSFSQSEDIYK). Asn-341 is a glycosylation site (N-linked (GlcNAc...) asparagine). A helical transmembrane segment spans residues 377–397 (WIIFTCLMAVVSAFSVSFGPM). Over 398 to 422 (TWVVLSEIFPKDIRGRAFSFINCFN) the chain is Cytoplasmic. Trp-399 lines the D-glucose pocket. Transmembrane regions (helical) follow at residues 423-443 (VGAN…IGLS) and 444-464 (GVFL…YLVL). Residues 465 to 513 (PETKGKSLQDIDRELSQTRMIHRQELCSIFQRRRFSPGYQRVQLTSTAT) are Cytoplasmic-facing.

This sequence belongs to the major facilitator superfamily. Sugar transporter (TC 2.A.1.1) family. Glucose transporter subfamily.

The protein resides in the endomembrane system. It is found in the cytoplasm. It localises to the perinuclear region. It catalyses the reaction D-glucose(out) = D-glucose(in). In terms of biological role, facilitative glucose transporter required for the development of the cardiovascular system. The chain is Solute carrier family 2, facilitated glucose transporter member 10 from Danio rerio (Zebrafish).